Here is a 449-residue protein sequence, read N- to C-terminus: Phosphoglucosamine mutase (449 aa).

The active-site Phosphoserine intermediate is the S103. Residues S103, D240, D242, and D244 each contribute to the Mg(2+) site. A Phosphoserine modification is found at S103.

The protein belongs to the phosphohexose mutase family. Mg(2+) serves as cofactor. In terms of processing, activated by phosphorylation.

The enzyme catalyses alpha-D-glucosamine 1-phosphate = D-glucosamine 6-phosphate. Catalyzes the conversion of glucosamine-6-phosphate to glucosamine-1-phosphate. This chain is Phosphoglucosamine mutase, found in Thermobifida fusca (strain YX).